Here is a 1516-residue protein sequence, read N- to C-terminus: EF-hand calcium-binding domain-containing protein 6 (1516 aa).

The disordered stretch occupies residues Met1 to Ala23. Over residues Lys12–Thr21 the composition is skewed to polar residues. EF-hand domains follow at residues Ser96 to Pro131, Arg197 to Arg232, Lys321 to Arg356, Ser444 to Lys462, and Arg528 to Tyr563. Residues Asp109, Asn111, Asn113, Met115, Asp120, Asp210, Asn212, Thr214, and Glu221 each contribute to the Ca(2+) site. A disordered region spans residues Glu618–Asn638. Residues Gln628–Asn638 show a composition bias toward polar residues. EF-hand domains are found at residues Lys674–Pro690, Glu763–Asn798, Leu905–Pro940, Ser1086–Lys1121, Ser1193–Ile1228, and Leu1229–Pro1264. 4 residues coordinate Ca(2+): Asp776, Asp778, Asp780, and Asp787. A Phosphothreonine modification is found at Thr906. Positions Val1263–Gly1318 are disordered. Phosphoserine is present on Ser1265. Over residues Gly1274–Tyr1297 the composition is skewed to polar residues. Residue Ser1311 is modified to Phosphoserine. A phosphothreonine mark is found at Thr1315 and Thr1319. An interaction with PARK7 region spans residues Gly1318–Gln1516. EF-hand domains follow at residues Lys1348–Asp1373, Ile1374–Ala1409, Met1454–Asn1484, and Leu1485–Gln1516. The segment at Asn1422–Gln1516 is interaction with AR. Residues Asp1462, Asn1464, Thr1466, and Asp1473 each contribute to the Ca(2+) site.

Microtubule inner protein component of sperm flagellar doublet microtubules. Binds PARK7. Part of a ternary complex containing PARK7, EFCAB6/DJBP and AR.

The protein resides in the nucleus. The protein localises to the cytoplasm. It is found in the cytoskeleton. It localises to the flagellum axoneme. Its function is as follows. Negatively regulates the androgen receptor by recruiting histone deacetylase complex, and protein DJ-1 antagonizes this inhibition by abrogation of this complex. Microtubule inner protein (MIP) part of the dynein-decorated doublet microtubules (DMTs) in cilia axoneme, which is required for motile cilia beating. This Mus musculus (Mouse) protein is EF-hand calcium-binding domain-containing protein 6 (Efcab6).